The chain runs to 240 residues: DISARM protein DrmC (240 aa).

In terms of domain architecture, PLD phosphodiesterase spans 174–201 (GYSSLHAKVIMVDEEKAFVSSANLSYNG). Residues histidine 179, lysine 181, and aspartate 186 contribute to the active site.

Belongs to the phospholipase D family.

The protein resides in the cytoplasm. Its function is as follows. Component of antiviral defense system DISARM (defense island system associated with restriction-modification), composed of DrmE, DrmA, DrmB, DrmC and DrmMII. DISARM is probably a multi-gene restriction module, this subunit is probably a phospholipase or nuclease. Expression of DISARM in B.subtilis (strain BEST7003) confers resistance to phages Nf, phi29, phi105, phi3T, SPO1, SPR and SPP1. Protection is over 10(7)-fold against phi3T, 10(4)-10(5)-fold against Nf, phi29, phi105 and SPR, 100-fold against SPO1 and 10-fold against SPP1. DISARM does not interfere with phage adsorption, but instead interferes with (phi3T) DNA replication early in its cycle, preventing replication, circularization and lysogeny and probably causes phage DNA degradation (DNA is degraded in SPP1-infected cells). This Bacillus paralicheniformis (strain ATCC 9945a / NCIMB 11709 / CD-2) protein is DISARM protein DrmC.